Consider the following 135-residue polypeptide: Poly [ADP-ribose] polymerase 1 (135 aa).

In terms of domain architecture, PARP alpha-helical spans 1–21; the sequence is QAKVEMLDNLLDIEVAYSLLK. Residues 30-135 form the PARP catalytic domain; sequence DPIDINYEKL…APVTGYMFGK (106 aa). Residues 104–106, Gly-113, and Arg-120 contribute to the NAD(+) site; that span reads HGS. Lys-135 is an active-site residue.

The protein belongs to the ARTD/PARP family. In terms of assembly, homodimer; PARP-type zinc-fingers from separate parp1 molecules form a dimer module that specifically recognizes DNA strand breaks. In terms of processing, poly-ADP-ribosylated on serine, glutamate and aspartate residues by autocatalysis. Auto-ADP-ribosylation on serine takes place following interaction with HPF1. Auto poly-ADP-ribosylation on serine residues promotes its dissociation from chromatin.

The protein localises to the chromosome. It localises to the nucleus. The protein resides in the nucleolus. Its subcellular location is the cytoplasm. It is found in the cytosol. It carries out the reaction NAD(+) + (ADP-D-ribosyl)n-acceptor = nicotinamide + (ADP-D-ribosyl)n+1-acceptor + H(+).. The catalysed reaction is L-seryl-[protein] + NAD(+) = O-(ADP-D-ribosyl)-L-seryl-[protein] + nicotinamide + H(+). It catalyses the reaction L-aspartyl-[protein] + NAD(+) = 4-O-(ADP-D-ribosyl)-L-aspartyl-[protein] + nicotinamide. The enzyme catalyses L-glutamyl-[protein] + NAD(+) = 5-O-(ADP-D-ribosyl)-L-glutamyl-[protein] + nicotinamide. It carries out the reaction L-tyrosyl-[protein] + NAD(+) = O-(ADP-D-ribosyl)-L-tyrosyl-[protein] + nicotinamide + H(+). The catalysed reaction is L-histidyl-[protein] + NAD(+) = N(tele)-(ADP-D-ribosyl)-L-histidyl-[protein] + nicotinamide + H(+). ADP-ribosyltransferase activity is regulated via an allosteric activation mechanism. In absence of activation signal, parp1 is autoinhibited by the PARP alpha-helical domain (also named HD region), which prevents effective NAD(+)-binding. Activity is highly stimulated by signals, such as DNA strand breaks. Binding to damaged DNA unfolds the PARP alpha-helical domain, relieving autoinhibition. Poly-ADP-ribosyltransferase activity is tightly regulated and parp1 is removed from damaged chromatin following initial poly-ADP-ribosylation of chromatin to avoid prolonged residence (trapping) that has cytotoxic consequences. A number of factors or post-translational modifications (auto-poly-ADP-ribosylation) promote parp1 removal from chromatin. Poly-ADP-ribosyltransferase that mediates poly-ADP-ribosylation of proteins and plays a key role in DNA repair. Mediates glutamate, aspartate, serine, histidine or tyrosine ADP-ribosylation of proteins: the ADP-D-ribosyl group of NAD(+) is transferred to the acceptor carboxyl group of target residues and further ADP-ribosyl groups are transferred to the 2'-position of the terminal adenosine moiety, building up a polymer with an average chain length of 20-30 units. Serine ADP-ribosylation of proteins constitutes the primary form of ADP-ribosylation of proteins in response to DNA damage. Specificity for the different amino acids is conferred by interacting factors, such as hpf1 and nmnat1. Following interaction with hpf1, catalyzes serine ADP-ribosylation of target proteins; hpf1 confers serine specificity by completing the parp1 active site. Also catalyzes tyrosine ADP-ribosylation of target proteins following interaction with hpf1. Following interaction with nmnat1, catalyzes glutamate and aspartate ADP-ribosylation of target proteins; nmnat1 confers glutamate and aspartate specificity. Parp1 initiates the repair of DNA breaks: recognizes and binds DNA breaks within chromatin and recruits hpf1, licensing serine ADP-ribosylation of target proteins, such as histones (H2BS6ADPr and H3S10ADPr), thereby promoting decompaction of chromatin and the recruitment of repair factors leading to the reparation of DNA strand breaks. In addition to base excision repair (BER) pathway, also involved in double-strand breaks (DSBs) repair. Mediates the poly-ADP-ribosylation of a number of proteins. In addition to proteins, also able to ADP-ribosylate DNA: catalyzes ADP-ribosylation of DNA strand break termini containing terminal phosphates and a 2'-OH group in single- and double-stranded DNA, respectively. Parp1-mediated DNA repair in neurons plays a role in sleep: senses DNA damage in neurons and promotes sleep, facilitating efficient DNA repair. In addition to DNA repair, also involved in other processes, such as transcription regulation, programmed cell death, membrane repair, adipogenesis and innate immunity. Acts as a repressor of transcription: binds to nucleosomes and modulates chromatin structure in a manner similar to histone H1, thereby altering RNA polymerase II. Acts both as a positive and negative regulator of transcription elongation, depending on the context. Poly-ADP-ribose chains generated by parp1 also play a role in poly-ADP-ribose-dependent cell death, a process named parthanatos. Also acts as a negative regulator of the cGAS-STING pathway by mediating poly-ADP-ribosylation and inactivation of cgas. Acts as a negative regulator of adipogenesis by catalyzing poly ADP-ribosylation of histone H2B on 'Glu-35' (H2BE35ADPr). The polypeptide is Poly [ADP-ribose] polymerase 1 (parp1) (Oncorhynchus masou (Cherry salmon)).